A 252-amino-acid chain; its full sequence is Imidazole glycerol phosphate synthase subunit HisF (252 aa).

Active-site residues include D11 and D130.

This sequence belongs to the HisA/HisF family. Heterodimer of HisH and HisF.

The protein localises to the cytoplasm. The catalysed reaction is 5-[(5-phospho-1-deoxy-D-ribulos-1-ylimino)methylamino]-1-(5-phospho-beta-D-ribosyl)imidazole-4-carboxamide + L-glutamine = D-erythro-1-(imidazol-4-yl)glycerol 3-phosphate + 5-amino-1-(5-phospho-beta-D-ribosyl)imidazole-4-carboxamide + L-glutamate + H(+). It functions in the pathway amino-acid biosynthesis; L-histidine biosynthesis; L-histidine from 5-phospho-alpha-D-ribose 1-diphosphate: step 5/9. IGPS catalyzes the conversion of PRFAR and glutamine to IGP, AICAR and glutamate. The HisF subunit catalyzes the cyclization activity that produces IGP and AICAR from PRFAR using the ammonia provided by the HisH subunit. In Bacillus velezensis (strain DSM 23117 / BGSC 10A6 / LMG 26770 / FZB42) (Bacillus amyloliquefaciens subsp. plantarum), this protein is Imidazole glycerol phosphate synthase subunit HisF.